A 430-amino-acid chain; its full sequence is Serine--tRNA ligase (430 aa).

237–239 (TAE) is a binding site for L-serine. Position 268 to 270 (268 to 270 (RSE)) interacts with ATP. Residue glutamate 291 coordinates L-serine. 355-358 (EISS) is an ATP binding site. Serine 391 lines the L-serine pocket.

It belongs to the class-II aminoacyl-tRNA synthetase family. Type-1 seryl-tRNA synthetase subfamily. As to quaternary structure, homodimer. The tRNA molecule binds across the dimer.

It is found in the cytoplasm. It carries out the reaction tRNA(Ser) + L-serine + ATP = L-seryl-tRNA(Ser) + AMP + diphosphate + H(+). The catalysed reaction is tRNA(Sec) + L-serine + ATP = L-seryl-tRNA(Sec) + AMP + diphosphate + H(+). It participates in aminoacyl-tRNA biosynthesis; selenocysteinyl-tRNA(Sec) biosynthesis; L-seryl-tRNA(Sec) from L-serine and tRNA(Sec): step 1/1. Catalyzes the attachment of serine to tRNA(Ser). Is also able to aminoacylate tRNA(Sec) with serine, to form the misacylated tRNA L-seryl-tRNA(Sec), which will be further converted into selenocysteinyl-tRNA(Sec). The chain is Serine--tRNA ligase from Yersinia pseudotuberculosis serotype O:1b (strain IP 31758).